The sequence spans 300 residues: Small ribosomal subunit protein uS4m (300 aa).

In terms of domain architecture, S4 RNA-binding spans 146–209 (KRVDMVLLRS…MKRKLLKRLK (64 aa)).

It belongs to the universal ribosomal protein uS4 family.

It is found in the mitochondrion. The protein is Small ribosomal subunit protein uS4m (mrps4) of Dictyostelium discoideum (Social amoeba).